The sequence spans 362 residues: Ribosome-binding ATPase YchF (362 aa).

One can recognise an OBG-type G domain in the interval 3 to 255 (FKCGIIGLPN…MSDEEKKSFM (253 aa)). Position 12–17 (12–17 (NVGKST)) interacts with ATP. Mg(2+) is bound by residues serine 16 and threonine 36. The region spanning 277 to 360 (NLITFFTVGD…QDGDIIHFLF (84 aa)) is the TGS domain.

It belongs to the TRAFAC class OBG-HflX-like GTPase superfamily. OBG GTPase family. YchF/OLA1 subfamily. The cofactor is Mg(2+).

ATPase that binds to both the 70S ribosome and the 50S ribosomal subunit in a nucleotide-independent manner. This is Ribosome-binding ATPase YchF from Buchnera aphidicola subsp. Acyrthosiphon pisum (strain APS) (Acyrthosiphon pisum symbiotic bacterium).